A 266-amino-acid polypeptide reads, in one-letter code: Interleukin-1 beta (266 aa).

The propeptide occupies 1 to 113 (MATVPEPTNE…ETYDDDLLCD (113 aa)).

The protein belongs to the IL-1 family. As to quaternary structure, monomer. In its precursor form, weakly interacts with full-length MEFV; the mature cytokine does not interact at all. Interacts with integrins ITGAV:ITGBV and ITGA5:ITGB1; integrin-binding is required for IL1B signaling. Interacts with cargo receptor TMED10; the interaction is direct and is required for the secretion of IL1B mature form. Interacts with HSP90AB1; the interaction facilitates cargo translocation into the ERGIC. Interacts with HSP90B1; the interaction facilitates cargo translocation into the ERGIC.

The protein resides in the cytoplasm. It localises to the cytosol. Its subcellular location is the secreted. It is found in the lysosome. The protein localises to the extracellular exosome. Functionally, potent pro-inflammatory cytokine. Initially discovered as the major endogenous pyrogen, induces prostaglandin synthesis, neutrophil influx and activation, T-cell activation and cytokine production, B-cell activation and antibody production, and fibroblast proliferation and collagen production. Promotes Th17 differentiation of T-cells. Synergizes with IL12/interleukin-12 to induce IFNG synthesis from T-helper 1 (Th1) cells. Plays a role in angiogenesis by inducing VEGF production synergistically with TNF and IL6. Involved in transduction of inflammation downstream of pyroptosis: its mature form is specifically released in the extracellular milieu by passing through the gasdermin-D (GSDMD) pore. The chain is Interleukin-1 beta (IL1B) from Delphinapterus leucas (Beluga whale).